Here is a 321-residue protein sequence, read N- to C-terminus: Sporulation protein cse15 (321 aa).

Coiled-coil stretches lie at residues 37-70 (FHQK…TKEK) and 108-205 (IEEK…KEKL). Composition is skewed to basic and acidic residues over residues 234–243 (GTKQKEKTEE) and 282–293 (AKSHTIEELKNR). 2 disordered regions span residues 234 to 253 (GTKQ…AQPN) and 274 to 293 (AHAQ…LKNR).

The protein is Sporulation protein cse15 (cse15) of Bacillus subtilis (strain 168).